The following is a 557-amino-acid chain: D-arabinono-1,4-lactone oxidase (557 aa).

An FAD-binding PCMH-type domain is found at 26 to 209 (FFCKPQAIFQ…THVTLRTIPK (184 aa)). Residue histidine 63 is modified to Pros-8alpha-FAD histidine.

Belongs to the oxygen-dependent FAD-linked oxidoreductase family. FAD serves as cofactor.

It localises to the mitochondrion membrane. It catalyses the reaction D-arabinono-1,4-lactone + O2 = dehydro-D-arabinono-1,4-lactone + H2O2 + H(+). It participates in cofactor biosynthesis; D-erythroascorbate biosynthesis; dehydro-D-arabinono-1,4-lactone from D-arabinose: step 2/2. This chain is D-arabinono-1,4-lactone oxidase (ALO1), found in Debaryomyces hansenii (strain ATCC 36239 / CBS 767 / BCRC 21394 / JCM 1990 / NBRC 0083 / IGC 2968) (Yeast).